Reading from the N-terminus, the 48-residue chain is ATP synthase protein 8 (48 aa).

Residues 12–32 (LLTFGMLAISMLLYLVSTIIL) traverse the membrane as a helical segment.

This sequence belongs to the ATPase protein 8 family. As to quaternary structure, F-type ATPases have 2 components, CF(1) - the catalytic core - and CF(0) - the membrane proton channel.

It localises to the mitochondrion membrane. Mitochondrial membrane ATP synthase (F(1)F(0) ATP synthase or Complex V) produces ATP from ADP in the presence of a proton gradient across the membrane which is generated by electron transport complexes of the respiratory chain. F-type ATPases consist of two structural domains, F(1) - containing the extramembraneous catalytic core and F(0) - containing the membrane proton channel, linked together by a central stalk and a peripheral stalk. During catalysis, ATP synthesis in the catalytic domain of F(1) is coupled via a rotary mechanism of the central stalk subunits to proton translocation. Part of the complex F(0) domain. Minor subunit located with subunit a in the membrane. The polypeptide is ATP synthase protein 8 (ATP8) (Debaryomyces hansenii (strain ATCC 36239 / CBS 767 / BCRC 21394 / JCM 1990 / NBRC 0083 / IGC 2968) (Yeast)).